The chain runs to 281 residues: Very-long-chain (3R)-3-hydroxyacyl-CoA dehydratase 1 (281 aa).

The Cytoplasmic portion of the chain corresponds to methionine 1–tryptophan 68. Residues leucine 69–valine 88 form a helical membrane-spanning segment. At arginine 89–threonine 107 the chain is on the lumenal side. A helical membrane pass occupies residues leucine 108 to isoleucine 124. Residues glycine 125–threonine 134 are Cytoplasmic-facing. A helical membrane pass occupies residues glycine 135–isoleucine 152. The Lumenal portion of the chain corresponds to lysine 153–glutamate 158. A helical transmembrane segment spans residues glutamate 159–isoleucine 173. The Cytoplasmic segment spans residues threonine 174–tyrosine 196. A helical transmembrane segment spans residues asparagine 197–isoleucine 214. Residues tyrosine 203 and glutamate 210 contribute to the active site. The Lumenal segment spans residues tyrosine 215 to phenylalanine 244. Residue asparagine 236 is glycosylated (N-linked (GlcNAc...) asparagine). Residues leucine 245 to histidine 262 traverse the membrane as a helical segment. Topologically, residues methionine 263–aspartate 281 are cytoplasmic.

This sequence belongs to the very long-chain fatty acids dehydratase HACD family. In terms of assembly, may interact with enzymes of the ELO family (including ELOVL1); with those enzymes that mediate condensation, the first of the four steps of the reaction cycle responsible for fatty acids elongation, may be part of a larger fatty acids elongase complex. Interacts with TECR. Post-translationally, N-glycosylated. In terms of tissue distribution, expressed at high levels in heart, skeletal muscle and testis, weak expression in kidney and liver.

It is found in the endoplasmic reticulum membrane. The enzyme catalyses a very-long-chain (3R)-3-hydroxyacyl-CoA = a very-long-chain (2E)-enoyl-CoA + H2O. It carries out the reaction (3R)-hydroxyhexadecanoyl-CoA = (2E)-hexadecenoyl-CoA + H2O. The catalysed reaction is (3R)-hydroxyoctadecanoyl-CoA = (2E)-octadecenoyl-CoA + H2O. It catalyses the reaction (3R)-hydroxyeicosanoyl-CoA = (2E)-eicosenoyl-CoA + H2O. The enzyme catalyses (3R)-hydroxydocosanoyl-CoA = (2E)-docosenoyl-CoA + H2O. It carries out the reaction (3R)-hydroxytetracosanoyl-CoA = (2E)-tetracosenoyl-CoA + H2O. The catalysed reaction is (3R)-hydroxyhexacosanoyl-CoA = (2E)-hexacosenoyl-CoA + H2O. It functions in the pathway lipid metabolism; fatty acid biosynthesis. The polypeptide is Very-long-chain (3R)-3-hydroxyacyl-CoA dehydratase 1 (Mus musculus (Mouse)).